Here is a 1168-residue protein sequence, read N- to C-terminus: DNA-directed RNA polymerase subunit beta (1168 aa).

The protein belongs to the RNA polymerase beta chain family. The RNAP catalytic core consists of 2 alpha, 1 beta, 1 beta' and 1 omega subunit. When a sigma factor is associated with the core the holoenzyme is formed, which can initiate transcription.

It catalyses the reaction RNA(n) + a ribonucleoside 5'-triphosphate = RNA(n+1) + diphosphate. Its function is as follows. DNA-dependent RNA polymerase catalyzes the transcription of DNA into RNA using the four ribonucleoside triphosphates as substrates. This Corynebacterium kroppenstedtii (strain DSM 44385 / JCM 11950 / CIP 105744 / CCUG 35717) protein is DNA-directed RNA polymerase subunit beta.